We begin with the raw amino-acid sequence, 168 residues long: Alpha-amylase/trypsin inhibitor CM3 (168 aa).

Residues 1–25 (MACKSSCSLLLLAAVLLSVLAAASA) form the signal peptide.

The protein belongs to the protease inhibitor I6 (cereal trypsin/alpha-amylase inhibitor) family. Subunit of the tetrameric inhibitor. Five disulfide bonds, which are essential for the inhibitor activity, are probably present. In terms of tissue distribution, developing endosperm.

It localises to the secreted. Functionally, alpha-amylase/trypsin inhibitor. It could be involved in insect defense mechanisms. The protein is Alpha-amylase/trypsin inhibitor CM3 of Triticum aestivum (Wheat).